The following is a 253-amino-acid chain: 5-oxoprolinase subunit A (253 aa).

This sequence belongs to the LamB/PxpA family. Forms a complex composed of PxpA, PxpB and PxpC.

It catalyses the reaction 5-oxo-L-proline + ATP + 2 H2O = L-glutamate + ADP + phosphate + H(+). Catalyzes the cleavage of 5-oxoproline to form L-glutamate coupled to the hydrolysis of ATP to ADP and inorganic phosphate. The protein is 5-oxoprolinase subunit A of Bacillus cereus (strain B4264).